A 327-amino-acid polypeptide reads, in one-letter code: Aspartate carbamoyltransferase catalytic subunit (327 aa).

The carbamoyl phosphate site is built by arginine 54 and threonine 55. Lysine 82 is an L-aspartate binding site. Arginine 104, histidine 134, and glutamine 137 together coordinate carbamoyl phosphate. 2 residues coordinate L-aspartate: arginine 177 and arginine 232. Residues glycine 280 and proline 281 each coordinate carbamoyl phosphate.

The protein belongs to the aspartate/ornithine carbamoyltransferase superfamily. ATCase family. Heterododecamer (2C3:3R2) of six catalytic PyrB chains organized as two trimers (C3), and six regulatory PyrI chains organized as three dimers (R2).

The enzyme catalyses carbamoyl phosphate + L-aspartate = N-carbamoyl-L-aspartate + phosphate + H(+). Its pathway is pyrimidine metabolism; UMP biosynthesis via de novo pathway; (S)-dihydroorotate from bicarbonate: step 2/3. Its function is as follows. Catalyzes the condensation of carbamoyl phosphate and aspartate to form carbamoyl aspartate and inorganic phosphate, the committed step in the de novo pyrimidine nucleotide biosynthesis pathway. This is Aspartate carbamoyltransferase catalytic subunit from Micrococcus luteus (strain ATCC 4698 / DSM 20030 / JCM 1464 / CCM 169 / CCUG 5858 / IAM 1056 / NBRC 3333 / NCIMB 9278 / NCTC 2665 / VKM Ac-2230) (Micrococcus lysodeikticus).